The chain runs to 145 residues: UPF0735 ACT domain-containing protein CPE1414 (145 aa).

Residues 69 to 144 (IFNMVVTHEK…GVEKVEFVAM (76 aa)) form the ACT domain.

Belongs to the UPF0735 family.

This Clostridium perfringens (strain 13 / Type A) protein is UPF0735 ACT domain-containing protein CPE1414.